The following is a 733-amino-acid chain: Ribosomal protein S6 kinase alpha-2 (733 aa).

The 260-residue stretch at 59-318 (FELLKVLGQG…VEEIKRHPFF (260 aa)) folds into the Protein kinase 1 domain. ATP-binding positions include 65-73 (LGQGSYGKV) and lysine 91. The active-site Proton acceptor is aspartate 184. Serine 218 bears the Phosphoserine; by PDPK1 mark. One can recognise an AGC-kinase C-terminal domain in the interval 319–388 (VTIDWNTLYR…VASSLIQEPS (70 aa)). Serine 377 carries the phosphoserine modification. The 258-residue stretch at 415–672 (YEIKEDIGVG…AMQVLKHPWV (258 aa)) folds into the Protein kinase 2 domain. ATP contacts are provided by residues 421–429 (IGVGSYSVC) and lysine 444. Aspartate 532 functions as the Proton acceptor in the catalytic mechanism.

It belongs to the protein kinase superfamily. AGC Ser/Thr protein kinase family. S6 kinase subfamily. As to quaternary structure, forms a complex with either MAPK1/ERK2 or MAPK3/ERK1 in quiescent cells. Transiently dissociates following mitogenic stimulation. Interacts with FBXO5; cooperate to induce the metaphase arrest of early blastomeres; increases and stabilizes interaction of FBXO5 with CDC20. Mg(2+) serves as cofactor. In terms of processing, activated by phosphorylation at Ser-218 by PDPK1. Autophosphorylated on Ser-377, as part of the activation process. May be phosphorylated at Thr-356 and Ser-360 by MAPK1/ERK2 and MAPK3/ERK1. N-terminal myristoylation results in an activated kinase in the absence of added growth factors. As to expression, widely expressed with higher expression in lung, skeletal muscle, brain, uterus, ovary, thyroid and prostate.

The protein localises to the nucleus. It localises to the cytoplasm. It carries out the reaction L-seryl-[protein] + ATP = O-phospho-L-seryl-[protein] + ADP + H(+). The catalysed reaction is L-threonyl-[protein] + ATP = O-phospho-L-threonyl-[protein] + ADP + H(+). With respect to regulation, upon extracellular signal or mitogen stimulation, phosphorylated at Thr-570 in the C-terminal kinase domain (CTKD) by MAPK1/ERK2 and MAPK3/ERK1. The activated CTKD then autophosphorylates Ser-377, allowing binding of PDPK1, which in turn phosphorylates Ser-218 in the N-terminal kinase domain (NTDK) leading to the full activation of the protein and subsequent phosphorylation of the substrates by the NTKD. Serine/threonine-protein kinase that acts downstream of ERK (MAPK1/ERK2 and MAPK3/ERK1) signaling and mediates mitogenic and stress-induced activation of transcription factors, regulates translation, and mediates cellular proliferation, survival, and differentiation. May function as tumor suppressor in epithelial ovarian cancer cells. This is Ribosomal protein S6 kinase alpha-2 (RPS6KA2) from Homo sapiens (Human).